The sequence spans 160 residues: Nucleotide-binding protein CJA_2652 (160 aa).

It belongs to the YajQ family.

In terms of biological role, nucleotide-binding protein. This chain is Nucleotide-binding protein CJA_2652, found in Cellvibrio japonicus (strain Ueda107) (Pseudomonas fluorescens subsp. cellulosa).